Consider the following 270-residue polypeptide: 4-hydroxy-tetrahydrodipicolinate reductase (270 aa).

NAD(+) is bound by residues 11 to 16 and Glu37; that span reads GASGRM. Arg38 is an NADP(+) binding site. NAD(+) is bound by residues 101–103 and 125–128; these read GTT and APNM. Residue His158 is the Proton donor/acceptor of the active site. Position 159 (His159) interacts with (S)-2,3,4,5-tetrahydrodipicolinate. Catalysis depends on Lys162, which acts as the Proton donor. Position 168 to 169 (168 to 169) interacts with (S)-2,3,4,5-tetrahydrodipicolinate; sequence GT.

Belongs to the DapB family.

The protein resides in the cytoplasm. The enzyme catalyses (S)-2,3,4,5-tetrahydrodipicolinate + NAD(+) + H2O = (2S,4S)-4-hydroxy-2,3,4,5-tetrahydrodipicolinate + NADH + H(+). It carries out the reaction (S)-2,3,4,5-tetrahydrodipicolinate + NADP(+) + H2O = (2S,4S)-4-hydroxy-2,3,4,5-tetrahydrodipicolinate + NADPH + H(+). It functions in the pathway amino-acid biosynthesis; L-lysine biosynthesis via DAP pathway; (S)-tetrahydrodipicolinate from L-aspartate: step 4/4. Catalyzes the conversion of 4-hydroxy-tetrahydrodipicolinate (HTPA) to tetrahydrodipicolinate. The polypeptide is 4-hydroxy-tetrahydrodipicolinate reductase (Shewanella amazonensis (strain ATCC BAA-1098 / SB2B)).